The primary structure comprises 621 residues: MVKFKREVNFSGGDRGVYRPDLIRNICIIAHIDHGKTTLVDRILEITNTVDRRKMREQYLDMMDIERERGITIKAQPVKVMYTAEDGNTYEINIIDTPGHVDFSYEVGRSMAACEGAILLVDATQGVEAQTVAHTYLAIEHDLEIIPVINKIDLPNANIEETALEIKDLLGVSENEILLVSAKEGTGVKELLEAIVKRVPPPKGDINGKLKALIFDAKYDNYKGVIVHVRLFDGQVKPGDKIMTFSNKKVYEVQEVGVFLPEMEPVDSLSAGEVGYIIAGIKEVSDARVGDTITSANDPVDEALPGYREIKPMVFAGMFPGLPEYYEELRKALEKLKLNDSALYFEPTMSPAMGFGFRCGFLGPLHMEVVRERIEREFDLAVILTAPNVRYRVKLRNGEEIEITDPSKFPDEGEILEAYEPYVDLSIITPSEYIGAIINLVQNEKRGELRITENAGKNRVILRFDAPLAEIIYDFFDRMKAVSRGYASMDYEFKEYRRSDLVKVTILVNKEPVDALSFIVHRSKAYQMARKIVEKLKDLIPRHQFQIPIQAKAGGRIIARADIKALRKDVLAKCYGGDVTRKMKLLEKQKEGKKKLREIGRVTIPQEAFLALLKIGGEDEK.

One can recognise a tr-type G domain in the interval 21-203; sequence DLIRNICIIA…AIVKRVPPPK (183 aa). GTP-binding positions include 33–38 and 150–153; these read DHGKTT and NKID.

Belongs to the TRAFAC class translation factor GTPase superfamily. Classic translation factor GTPase family. LepA subfamily.

The protein localises to the cell inner membrane. It catalyses the reaction GTP + H2O = GDP + phosphate + H(+). Functionally, required for accurate and efficient protein synthesis under certain stress conditions. May act as a fidelity factor of the translation reaction, by catalyzing a one-codon backward translocation of tRNAs on improperly translocated ribosomes. Back-translocation proceeds from a post-translocation (POST) complex to a pre-translocation (PRE) complex, thus giving elongation factor G a second chance to translocate the tRNAs correctly. Binds to ribosomes in a GTP-dependent manner. This Thermotoga maritima (strain ATCC 43589 / DSM 3109 / JCM 10099 / NBRC 100826 / MSB8) protein is Elongation factor 4.